Here is a 452-residue protein sequence, read N- to C-terminus: Bifunctional protein GlmU (452 aa).

The pyrophosphorylase stretch occupies residues 1–224 (MNIVILAAGM…EWETHGVNSK (224 aa)). UDP-N-acetyl-alpha-D-glucosamine contacts are provided by residues 6-9 (LAAG), K20, Q71, 76-77 (GT), 98-100 (YGD), G135, E149, N164, and N222. D100 serves as a coordination point for Mg(2+). N222 is a binding site for Mg(2+). The segment at 225-245 (VQLAELERIHQRNIAHALLEQ) is linker. The segment at 246 to 452 (GVTLADPARI…NWQRPVKIKK (207 aa)) is N-acetyltransferase. Positions 328 and 346 each coordinate UDP-N-acetyl-alpha-D-glucosamine. H358 functions as the Proton acceptor in the catalytic mechanism. 2 residues coordinate UDP-N-acetyl-alpha-D-glucosamine: Y361 and N372. Residues A375, 381–382 (NY), S400, A418, and R435 each bind acetyl-CoA.

It in the N-terminal section; belongs to the N-acetylglucosamine-1-phosphate uridyltransferase family. This sequence in the C-terminal section; belongs to the transferase hexapeptide repeat family. In terms of assembly, homotrimer. Requires Mg(2+) as cofactor.

It is found in the cytoplasm. It catalyses the reaction alpha-D-glucosamine 1-phosphate + acetyl-CoA = N-acetyl-alpha-D-glucosamine 1-phosphate + CoA + H(+). It carries out the reaction N-acetyl-alpha-D-glucosamine 1-phosphate + UTP + H(+) = UDP-N-acetyl-alpha-D-glucosamine + diphosphate. The protein operates within nucleotide-sugar biosynthesis; UDP-N-acetyl-alpha-D-glucosamine biosynthesis; N-acetyl-alpha-D-glucosamine 1-phosphate from alpha-D-glucosamine 6-phosphate (route II): step 2/2. It participates in nucleotide-sugar biosynthesis; UDP-N-acetyl-alpha-D-glucosamine biosynthesis; UDP-N-acetyl-alpha-D-glucosamine from N-acetyl-alpha-D-glucosamine 1-phosphate: step 1/1. Its pathway is bacterial outer membrane biogenesis; LPS lipid A biosynthesis. Functionally, catalyzes the last two sequential reactions in the de novo biosynthetic pathway for UDP-N-acetylglucosamine (UDP-GlcNAc). The C-terminal domain catalyzes the transfer of acetyl group from acetyl coenzyme A to glucosamine-1-phosphate (GlcN-1-P) to produce N-acetylglucosamine-1-phosphate (GlcNAc-1-P), which is converted into UDP-GlcNAc by the transfer of uridine 5-monophosphate (from uridine 5-triphosphate), a reaction catalyzed by the N-terminal domain. In Janthinobacterium sp. (strain Marseille) (Minibacterium massiliensis), this protein is Bifunctional protein GlmU.